A 352-amino-acid polypeptide reads, in one-letter code: N-acetyl-gamma-glutamyl-phosphate reductase (352 aa).

The active site involves Cys155.

This sequence belongs to the NAGSA dehydrogenase family. Type 1 subfamily.

The protein localises to the cytoplasm. It carries out the reaction N-acetyl-L-glutamate 5-semialdehyde + phosphate + NADP(+) = N-acetyl-L-glutamyl 5-phosphate + NADPH + H(+). It functions in the pathway amino-acid biosynthesis; L-arginine biosynthesis; N(2)-acetyl-L-ornithine from L-glutamate: step 3/4. Functionally, catalyzes the NADPH-dependent reduction of N-acetyl-5-glutamyl phosphate to yield N-acetyl-L-glutamate 5-semialdehyde. The chain is N-acetyl-gamma-glutamyl-phosphate reductase from Gloeothece citriformis (strain PCC 7424) (Cyanothece sp. (strain PCC 7424)).